The chain runs to 207 residues: Small ribosomal subunit protein uS4 (207 aa).

Residues 31–55 (KCKLDSKPGQHGRTSGARTSDYGTQ) are disordered. Polar residues predominate over residues 42–53 (GRTSGARTSDYG). The region spanning 97 to 160 (SRLDNVVYRM…KKQARIVEAL (64 aa)) is the S4 RNA-binding domain.

This sequence belongs to the universal ribosomal protein uS4 family. As to quaternary structure, part of the 30S ribosomal subunit. Contacts protein S5. The interaction surface between S4 and S5 is involved in control of translational fidelity.

In terms of biological role, one of the primary rRNA binding proteins, it binds directly to 16S rRNA where it nucleates assembly of the body of the 30S subunit. With S5 and S12 plays an important role in translational accuracy. This chain is Small ribosomal subunit protein uS4, found in Burkholderia orbicola (strain MC0-3).